Consider the following 506-residue polypeptide: MFSLQDLCRKNLFLPLEPLGKHVVQRLGLYWEGHGSLKRVGDCFICVDKIWILSIHKAIQIAASEGNENIVKLFLLWKGSLQYAIIGALEGRQYDLIQKYYNQIGDCHENLPLIQDPEIYERCHELNVTCTFQCLFQHAIRDNMLPIFQKYGEDLNGNRRMVQLLYEMACRLQNYDIIKWIGFNLHVYNLEAIFSIAFVRKDLTLYSLGYMLLLGRMSTEDRNFISIITRHLEYASKKGLFDFVLESLKYGGQVDTVLFQAVKYNHRKILAHFIHEIPRETVEKLILHAVESRASRKTFNLLLSSINYCVNPFVKKLLHTVVKHKYMLIIKLLLERPKKKINLVDAALFKLVKYSTYAEIVKFMKEFSVDPERVVKMAARLMRVDLIKKISNDAWENKLERIKHLKQMVNTMNHRNGKNLLMYNIHNITGYTCLNTKEAFNLTRFYAVHNATCLFKEMCKSCFVHDKIQFRELLEDCLHIANRHDYIQIAETADECIKYIDLITPK.

It belongs to the asfivirus MGF 505 family.

Its function is as follows. Plays a role in virus cell tropism, and may be required for efficient virus replication in macrophages. The sequence is that of Protein MGF 505-9R from Ornithodoros (relapsing fever ticks).